A 301-amino-acid polypeptide reads, in one-letter code: Mycothiol acetyltransferase (301 aa).

N-acetyltransferase domains lie at 7-150 and 152-301; these read VDWQ…PPVD and VRFA…AVEG. 1D-myo-inositol 2-(L-cysteinylamino)-2-deoxy-alpha-D-glucopyranoside is bound at residue Asp39. Residues 80–82 and 88–93 contribute to the acetyl-CoA site; these read LVV and RRGIGS. Positions 179, 220, and 228 each coordinate 1D-myo-inositol 2-(L-cysteinylamino)-2-deoxy-alpha-D-glucopyranoside. 232-234 lines the acetyl-CoA pocket; it reads VGV. Tyr271 lines the 1D-myo-inositol 2-(L-cysteinylamino)-2-deoxy-alpha-D-glucopyranoside pocket. Acetyl-CoA is bound at residue 276 to 281; the sequence is NTAAVK.

Belongs to the acetyltransferase family. MshD subfamily. As to quaternary structure, monomer.

The catalysed reaction is 1D-myo-inositol 2-(L-cysteinylamino)-2-deoxy-alpha-D-glucopyranoside + acetyl-CoA = mycothiol + CoA + H(+). Its function is as follows. Catalyzes the transfer of acetyl from acetyl-CoA to desacetylmycothiol (Cys-GlcN-Ins) to form mycothiol. In Mycolicibacterium vanbaalenii (strain DSM 7251 / JCM 13017 / BCRC 16820 / KCTC 9966 / NRRL B-24157 / PYR-1) (Mycobacterium vanbaalenii), this protein is Mycothiol acetyltransferase.